The primary structure comprises 232 residues: Large ribosomal subunit protein uL1 (232 aa).

This sequence belongs to the universal ribosomal protein uL1 family. Part of the 50S ribosomal subunit.

In terms of biological role, binds directly to 23S rRNA. The L1 stalk is quite mobile in the ribosome, and is involved in E site tRNA release. Its function is as follows. Protein L1 is also a translational repressor protein, it controls the translation of the L11 operon by binding to its mRNA. In Xylella fastidiosa (strain 9a5c), this protein is Large ribosomal subunit protein uL1.